We begin with the raw amino-acid sequence, 331 residues long: Phenylalanine--tRNA ligase alpha subunit (331 aa).

Residue Glu252 coordinates Mg(2+).

Belongs to the class-II aminoacyl-tRNA synthetase family. Phe-tRNA synthetase alpha subunit type 1 subfamily. Tetramer of two alpha and two beta subunits. Mg(2+) is required as a cofactor.

Its subcellular location is the cytoplasm. It catalyses the reaction tRNA(Phe) + L-phenylalanine + ATP = L-phenylalanyl-tRNA(Phe) + AMP + diphosphate + H(+). This is Phenylalanine--tRNA ligase alpha subunit from Xanthomonas oryzae pv. oryzae (strain MAFF 311018).